Consider the following 366-residue polypeptide: Pectinesterase A (366 aa).

The N-terminal stretch at 1–24 (MLKTISGTLALSLIIAASVHQAQA) is a signal peptide. Residues threonine 109 and glutamine 153 each coordinate substrate. Aspartate 178 acts as the Proton donor in catalysis. A disulfide bond links cysteine 192 and cysteine 212. The active-site Nucleophile is aspartate 199. Residues arginine 219, asparagine 226, tyrosine 230, arginine 267, tryptophan 269, and threonine 272 each coordinate substrate.

This sequence belongs to the pectinesterase family. As to quaternary structure, monomer.

It is found in the secreted. It catalyses the reaction [(1-&gt;4)-alpha-D-galacturonosyl methyl ester](n) + n H2O = [(1-&gt;4)-alpha-D-galacturonosyl](n) + n methanol + n H(+). It functions in the pathway glycan metabolism; pectin degradation; 2-dehydro-3-deoxy-D-gluconate from pectin: step 1/5. In terms of biological role, involved in maceration and soft-rotting of plant tissue. This chain is Pectinesterase A (pemA), found in Dickeya chrysanthemi (Pectobacterium chrysanthemi).